The chain runs to 318 residues: Beta-ketoacyl-[acyl-carrier-protein] synthase III (318 aa).

Catalysis depends on residues cysteine 112 and histidine 245. An ACP-binding region spans residues 246–250; that stretch reads QANIR. Asparagine 275 is a catalytic residue.

The protein belongs to the thiolase-like superfamily. FabH family. Homodimer.

It is found in the cytoplasm. The catalysed reaction is malonyl-[ACP] + acetyl-CoA + H(+) = 3-oxobutanoyl-[ACP] + CO2 + CoA. It participates in lipid metabolism; fatty acid biosynthesis. Its function is as follows. Catalyzes the condensation reaction of fatty acid synthesis by the addition to an acyl acceptor of two carbons from malonyl-ACP. Catalyzes the first condensation reaction which initiates fatty acid synthesis and may therefore play a role in governing the total rate of fatty acid production. Possesses both acetoacetyl-ACP synthase and acetyl transacylase activities. Its substrate specificity determines the biosynthesis of branched-chain and/or straight-chain of fatty acids. This Rickettsia conorii (strain ATCC VR-613 / Malish 7) protein is Beta-ketoacyl-[acyl-carrier-protein] synthase III.